The following is an 80-amino-acid chain: uncharacterized protein (80 aa).

This is an uncharacterized protein from Bacillus subtilis (strain 168).